A 319-amino-acid chain; its full sequence is MEKANETSPVMGFVLLRLSAHPELEKTFFVLILLMYLVILLGNGVLILVTILDSRLHTPMYFFLGNLSFLDICFTTSSVPLVLDSFLTPQETISFSACAVQMALSFAMAGTECLLLSMMAFDRYVAICNPLRYSVIMSKAAYMPMAASSWAIGGAASVVHTSLAIQLPFCGDNVINHFTCEILAVLKLACADISINVISMEVTNVIFLGVPVLFISFSYVFIITTILRIPSAEGRKKVFSTCSAHLTVVIVFYGTLFFMYGKPKSKDSMGADKEDLSDKLIPLFYGVVTPMLNPIIYSLRNKDVKAAVRRLLRPKGFTQ.

Over 1-26 the chain is Extracellular; sequence MEKANETSPVMGFVLLRLSAHPELEK. N-linked (GlcNAc...) asparagine glycosylation occurs at asparagine 5. Residues 27-50 traverse the membrane as a helical segment; the sequence is TFFVLILLMYLVILLGNGVLILVT. The Cytoplasmic portion of the chain corresponds to 51 to 58; the sequence is ILDSRLHT. The chain crosses the membrane as a helical span at residues 59–80; it reads PMYFFLGNLSFLDICFTTSSVP. The Extracellular segment spans residues 81-101; sequence LVLDSFLTPQETISFSACAVQ. A disulfide bond links cysteine 98 and cysteine 190. Residues 102–121 traverse the membrane as a helical segment; that stretch reads MALSFAMAGTECLLLSMMAF. The Cytoplasmic portion of the chain corresponds to 122 to 140; sequence DRYVAICNPLRYSVIMSKA. Residues 141–159 form a helical membrane-spanning segment; it reads AYMPMAASSWAIGGAASVV. The Extracellular portion of the chain corresponds to 160 to 196; sequence HTSLAIQLPFCGDNVINHFTCEILAVLKLACADISIN. The chain crosses the membrane as a helical span at residues 197–220; it reads VISMEVTNVIFLGVPVLFISFSYV. Over 221-237 the chain is Cytoplasmic; that stretch reads FIITTILRIPSAEGRKK. The helical transmembrane segment at 238-260 threads the bilayer; it reads VFSTCSAHLTVVIVFYGTLFFMY. Topologically, residues 261–279 are extracellular; sequence GKPKSKDSMGADKEDLSDK. Residues 280–299 form a helical membrane-spanning segment; the sequence is LIPLFYGVVTPMLNPIIYSL. The Cytoplasmic segment spans residues 300–319; it reads RNKDVKAAVRRLLRPKGFTQ.

Belongs to the G-protein coupled receptor 1 family.

The protein localises to the cell membrane. In terms of biological role, odorant receptor. This chain is Olfactory receptor 2S2 (OR2S2), found in Homo sapiens (Human).